The sequence spans 317 residues: tRNA dimethylallyltransferase (317 aa).

14-21 (GPTAVGKT) is an ATP binding site. 16 to 21 (TAVGKT) contributes to the substrate binding site. Residues 39-42 (DSMQ) form an interaction with substrate tRNA region.

This sequence belongs to the IPP transferase family. In terms of assembly, monomer. Mg(2+) serves as cofactor.

The catalysed reaction is adenosine(37) in tRNA + dimethylallyl diphosphate = N(6)-dimethylallyladenosine(37) in tRNA + diphosphate. Its function is as follows. Catalyzes the transfer of a dimethylallyl group onto the adenine at position 37 in tRNAs that read codons beginning with uridine, leading to the formation of N6-(dimethylallyl)adenosine (i(6)A). The polypeptide is tRNA dimethylallyltransferase (Bacillus cereus (strain G9842)).